A 359-amino-acid chain; its full sequence is Adenosine 3'-phospho 5'-phosphosulfate transporter 1 (359 aa).

The next 7 helical transmembrane spans lie at 26-46 (NMKLALATGGIMGSFLLYGIL), 68-88 (STFLVLSNRVFAALMAIVIVL), 157-177 (YSIALTITTGCMIFFLTGKIS), 184-204 (TSYGIILMALYMFFDSFTSTF), 228-248 (SIISVFILILNGRLFPAIEFI), 254-276 (VFFDSTMLSASAGLGQMVIYYTI), and 300-320 (TLIYLHPLSNTQWIGALLVFG). The interval 332-359 (KKHGGHSHGGSNAATTTTPSNNSNNTEK) is disordered. The span at 340–359 (GGSNAATTTTPSNNSNNTEK) shows a compositional bias: low complexity.

The protein belongs to the nucleotide-sugar transporter family. SLC35B subfamily.

Its subcellular location is the golgi apparatus membrane. It carries out the reaction 3'-phosphoadenylyl sulfate(in) + adenosine 3',5'-bisphosphate(out) = 3'-phosphoadenylyl sulfate(out) + adenosine 3',5'-bisphosphate(in). Its function is as follows. Probably functions as a 3'-phosphoadenylyl sulfate:adenosine 3',5'-bisphosphate antiporter at the Golgi membranes. Mediates the transport from the cytosol into the lumen of the Golgi of 3'-phosphoadenylyl sulfate/adenosine 3'-phospho 5'-phosphosulfate (PAPS), a universal sulfuryl donor for sulfation events that take place in that compartment. The sequence is that of Adenosine 3'-phospho 5'-phosphosulfate transporter 1 (slc35b2) from Dictyostelium discoideum (Social amoeba).